A 538-amino-acid polypeptide reads, in one-letter code: Phosphoenolpyruvate carboxykinase (ATP) (538 aa).

R64 lines the substrate pocket. Positions 149 and 151 each coordinate Ca(2+). Positions 206 and 212 each coordinate substrate. Residues K212, H231, and 247–255 (GLSGTGKTT) contribute to the ATP site. 2 residues coordinate Mn(2+): K212 and H231. D268 provides a ligand contact to Mn(2+). ATP is bound by residues E296, R332, 447–448 (RI), and T453. R332 lines the substrate pocket.

This sequence belongs to the phosphoenolpyruvate carboxykinase (ATP) family. As to quaternary structure, monomer. Mn(2+) is required as a cofactor.

Its subcellular location is the cytoplasm. It catalyses the reaction oxaloacetate + ATP = phosphoenolpyruvate + ADP + CO2. It functions in the pathway carbohydrate biosynthesis; gluconeogenesis. Its activity is regulated as follows. Allosterically activated by calcium. Functionally, involved in the gluconeogenesis. Catalyzes the conversion of oxaloacetate (OAA) to phosphoenolpyruvate (PEP) through direct phosphoryl transfer between the nucleoside triphosphate and OAA. This is Phosphoenolpyruvate carboxykinase (ATP) from Salmonella typhimurium (strain LT2 / SGSC1412 / ATCC 700720).